Reading from the N-terminus, the 385-residue chain is Mannitol-1-phosphate 5-dehydrogenase (385 aa).

3-14 (DVHFGAGNIGRG) provides a ligand contact to NAD(+).

Belongs to the mannitol dehydrogenase family.

The enzyme catalyses D-mannitol 1-phosphate + NAD(+) = beta-D-fructose 6-phosphate + NADH + H(+). In Lactiplantibacillus plantarum (strain ATCC BAA-793 / NCIMB 8826 / WCFS1) (Lactobacillus plantarum), this protein is Mannitol-1-phosphate 5-dehydrogenase.